The chain runs to 356 residues: tRNA N6-adenosine threonylcarbamoyltransferase (356 aa).

Positions 115 and 119 each coordinate Fe cation. Substrate contacts are provided by residues 138–142 (LVSGG), aspartate 171, glycine 184, and asparagine 283. Fe cation is bound at residue aspartate 311.

Belongs to the KAE1 / TsaD family. Requires Fe(2+) as cofactor.

The protein resides in the cytoplasm. The enzyme catalyses L-threonylcarbamoyladenylate + adenosine(37) in tRNA = N(6)-L-threonylcarbamoyladenosine(37) in tRNA + AMP + H(+). Required for the formation of a threonylcarbamoyl group on adenosine at position 37 (t(6)A37) in tRNAs that read codons beginning with adenine. Is involved in the transfer of the threonylcarbamoyl moiety of threonylcarbamoyl-AMP (TC-AMP) to the N6 group of A37, together with TsaE and TsaB. TsaD likely plays a direct catalytic role in this reaction. In Prochlorococcus marinus (strain MIT 9301), this protein is tRNA N6-adenosine threonylcarbamoyltransferase.